The primary structure comprises 176 residues: MDLPGPIHDFLLVFLELGLILGSLGVVFLPNPIYSAFSLGLVLFCISLFYILLNSYFVAAAQLLIYVGAINVLIIFAVMFMNGSEYYKDFYLWTVGDGVTSMVCTSLFISLITTIPDTSWYGIIWTTKSNQIIEKDLISNSQQIGIHLVTDFFLPFELISIILLVALIGAIAIARQ.

The next 5 membrane-spanning stretches (helical) occupy residues 10-30 (FLLVFLELGLILGSLGVVFLP), 33-53 (IYSAFSLGLVLFCISLFYILL), 61-81 (AQLLIYVGAINVLIIFAVMFM), 92-112 (LWTVGDGVTSMVCTSLFISLI), and 153-173 (FLPFELISIILLVALIGAIAI).

This sequence belongs to the complex I subunit 6 family. In terms of assembly, NDH is composed of at least 16 different subunits, 5 of which are encoded in the nucleus.

It localises to the plastid. It is found in the chloroplast thylakoid membrane. It catalyses the reaction a plastoquinone + NADH + (n+1) H(+)(in) = a plastoquinol + NAD(+) + n H(+)(out). It carries out the reaction a plastoquinone + NADPH + (n+1) H(+)(in) = a plastoquinol + NADP(+) + n H(+)(out). Its function is as follows. NDH shuttles electrons from NAD(P)H:plastoquinone, via FMN and iron-sulfur (Fe-S) centers, to quinones in the photosynthetic chain and possibly in a chloroplast respiratory chain. The immediate electron acceptor for the enzyme in this species is believed to be plastoquinone. Couples the redox reaction to proton translocation, and thus conserves the redox energy in a proton gradient. This is NAD(P)H-quinone oxidoreductase subunit 6, chloroplastic (ndhG) from Jasminum nudiflorum (Winter jasmine).